A 173-amino-acid chain; its full sequence is MTALDIQISVEEGDWPSEDELQGLSTRILDVTVAFLIAEEKQPFPDDPPELSLVFTDDQSIREINAEWRNQDKPTNVLSFPAFPVTPGNMPGPMLGDIIVAYETLEREAAEMEKPFEEHLTHLLVHGFLHLFGYDHIEDDEAERMEGLETRILARLGLSDPYGDQPRIDSLEQ.

Residues histidine 126, histidine 130, and histidine 136 each coordinate Zn(2+).

It belongs to the endoribonuclease YbeY family. Requires Zn(2+) as cofactor.

Its subcellular location is the cytoplasm. Single strand-specific metallo-endoribonuclease involved in late-stage 70S ribosome quality control and in maturation of the 3' terminus of the 16S rRNA. This chain is Endoribonuclease YbeY, found in Sinorhizobium fredii (strain NBRC 101917 / NGR234).